The chain runs to 53 residues: Large ribosomal subunit protein eL40 (53 aa).

Belongs to the eukaryotic ribosomal protein eL40 family.

This chain is Large ribosomal subunit protein eL40, found in Pyrobaculum aerophilum (strain ATCC 51768 / DSM 7523 / JCM 9630 / CIP 104966 / NBRC 100827 / IM2).